An 852-amino-acid polypeptide reads, in one-letter code: Eukaryotic translation initiation factor 3 subunit C (852 aa).

The disordered stretch occupies residues 1–90 (MSRFFVSGYP…DSDSDDEGRK (90 aa)). The segment covering 14–57 (SSEEEDLLSSSEEELLSSESEEDNFSSDSEFGNDSDNDSSDSDS) has biased composition (acidic residues). The region spanning 597 to 772 (FHMHINLELL…SFVNFTTNDH (176 aa)) is the PCI domain. Residues 798 to 809 (TASNGYSRKQPM) are compositionally biased toward polar residues. The segment at 798 to 852 (TASNGYSRKQPMQQQQQQQQQQQQQKEQKELLHEENNRFRYANVNANNDEFQTTA) is disordered. The segment covering 810–822 (QQQQQQQQQQQQQ) has biased composition (low complexity). Residues 823–835 (KEQKELLHEENNR) are compositionally biased toward basic and acidic residues. The segment covering 841–852 (VNANNDEFQTTA) has biased composition (polar residues).

Belongs to the eIF-3 subunit C family. In terms of assembly, component of the eukaryotic translation initiation factor 3 (eIF-3) complex.

It localises to the cytoplasm. In terms of biological role, component of the eukaryotic translation initiation factor 3 (eIF-3) complex, which is involved in protein synthesis of a specialized repertoire of mRNAs and, together with other initiation factors, stimulates binding of mRNA and methionyl-tRNAi to the 40S ribosome. The eIF-3 complex specifically targets and initiates translation of a subset of mRNAs involved in cell proliferation. This Debaryomyces hansenii (strain ATCC 36239 / CBS 767 / BCRC 21394 / JCM 1990 / NBRC 0083 / IGC 2968) (Yeast) protein is Eukaryotic translation initiation factor 3 subunit C.